Consider the following 429-residue polypeptide: Fc receptor-like protein 1 (429 aa).

The N-terminal stretch at 1-16 (MLPRLLLLICAPLCEP) is a signal peptide. 3 consecutive Ig-like C2-type domains span residues 17–104 (AELF…SQIN), 109–200 (PVAD…VSIT), and 208–291 (PILM…EAVT). The Extracellular portion of the chain corresponds to 17-307 (AELFLIASPS…TGARSNHLTS (291 aa)). 3 cysteine pairs are disulfide-bonded: Cys38-Cys86, Cys134-Cys183, and Cys229-Cys276. Asn293 is a glycosylation site (N-linked (GlcNAc...) asparagine). Residues 308-328 (GVIEGLLSTLGPATVALLFCY) form a helical membrane-spanning segment. The Cytoplasmic segment spans residues 329 to 429 (GLKRKIGRRS…ITDVDYEDAM (101 aa)). Short sequence motifs (ITIM motif) lie at residues 354–359 (FTYLNS), 367–372 (PIYENV), 379–384 (EVYSLA), 410–415 (DIYSRL), and 423–428 (VDYEDA).

In terms of assembly, interacts with ABL1. Interacts with GRB2 and SOS1. Interacts with SHIP-1/INPP5D. In terms of processing, phosphorylated on tyrosines upon activation. Primarily expressed in secondary lymphoid tissues by mature subsets of B-cells. Detected in spleen, lymph node, heart, skeletal muscle, kidney, liver and placenta. Specifically expressed by mature B lineage cells with higher expression in naive versus memory B-cells (at protein level).

The protein localises to the cell membrane. In terms of biological role, type I transmembrane surface glycoprotein preferentially expressed by B-cells that regulates BCR-mediated signaling responses. Recruits ABL1 as the intracellular effector molecule to enhance B-cell activation. Also plays a negative role by suppressing ERK activation under homeostatic and BCR-stimulated conditions in a GRB2-dependent manner. The sequence is that of Fc receptor-like protein 1 (FCRL1) from Homo sapiens (Human).